The following is a 1429-amino-acid chain: Nitric oxide synthase 1 (1429 aa).

The tract at residues 1-200 is interaction with NOSIP; it reads MEEHTFGVQQ…LQDSGEQDEL (200 aa). In terms of domain architecture, PDZ spans 17 to 99; sequence SVRLFKRKVG…ETHVVLILRG (83 aa). Disordered stretches follow at residues 114–174 and 271–298; these read DGTP…SVSQ and NNPY…SRCP. The interaction with DYNLL1/PIN stretch occupies residues 163–240; it reads QGRGQGAGSV…TGIQVDRDLD (78 aa). Polar residues predominate over residues 272–294; it reads NPYSENEQSPASGKQSPTKNGSP. S280 bears the Phosphoserine mark. S334 contacts (6R)-L-erythro-5,6,7,8-tetrahydrobiopterin. A heme b-binding site is contributed by C415. Q478, W587, Y588, and E592 together coordinate L-arginine. (6R)-L-erythro-5,6,7,8-tetrahydrobiopterin-binding residues include V677, W678, and F691. Y706 contributes to the heme b binding site. Residues 725–745 form a calmodulin-binding region; it reads KRRAIGFKKLAEAVKFSAKLM. A Flavodoxin-like domain is found at 755 to 935; the sequence is ATILYATETG…AFRTWAKKVF (181 aa). FMN contacts are provided by T761, E762, T763, K765, S766, S807, T808, and G812. Residues S847, S857, and S858 each carry the phosphoserine modification. Residues S886, H891, C893, E919, and Q923 each coordinate FMN. The FAD-binding FR-type domain occupies 990-1237; the sequence is KRVSAARLLS…VRGAPSFHLP (248 aa). Residue R1010 participates in NADP(+) binding. The FAD site is built by H1032, R1173, Y1174, Y1175, S1176, T1191, and A1193. S1196 serves as a coordination point for NADP(+). The FAD site is built by Y1197, V1210, C1211, and S1212. T1251, R1284, S1313, R1314, K1320, Y1322, Q1324, D1357, T1398, and R1400 together coordinate NADP(+).

Belongs to the NOS family. In terms of assembly, homodimer. Interacts with DLG4; the interaction possibly being prevented by the association between NOS1 and CAPON. Forms a ternary complex with CAPON and RASD1. Forms a ternary complex with CAPON and SYN1. Interacts with ZDHHC23. Interacts with NOSIP; which may impair its synaptic location. Interacts with HTR4. Interacts with VAC14. Interacts (via N-terminal domain) with DLG4 (via N-terminal tandem pair of PDZ domains). Interacts with SLC6A4. Forms a complex with ASL, ASS1 and SLC7A1; the complex regulates cell-autonomous L-arginine synthesis and citrulline recycling while channeling extracellular L-arginine to nitric oxide synthesis pathway. Interacts with DMD; localizes NOS1 to sarcolemma in muscle cells. Interacts with DYNLL1; inhibits the nitric oxide synthase activity. The cofactor is heme b. FAD is required as a cofactor. Requires FMN as cofactor. (6R)-L-erythro-5,6,7,8-tetrahydrobiopterin serves as cofactor. Post-translationally, ubiquitinated; mediated by STUB1/CHIP in the presence of Hsp70 and Hsp40 (in vitro). In terms of tissue distribution, widely expressed in the nervous system: expressed in cerebrum, olfactory bulb, hippocampus, midbrain, cerebellum, pons, medulla oblongata, and spinal cord. Also found in skeletal muscle, where it is localized beneath the sarcolemma of fast twitch muscle fibers, and in spleen, heart, kidney, and liver. N-NOS-1 and N-NOS-2 are found in all parts of the nervous system. NNOS beta and gamma occur in a region-specific manner in the brain and NNOS beta expression is developmentally regulated. NNOS Mu is only found in mature skeletal and cardiac muscles.

The protein localises to the cell membrane. Its subcellular location is the sarcolemma. It is found in the cell projection. It localises to the dendritic spine. The catalysed reaction is 2 L-arginine + 3 NADPH + 4 O2 + H(+) = 2 L-citrulline + 2 nitric oxide + 3 NADP(+) + 4 H2O. With respect to regulation, stimulated by calcium/calmodulin. Inhibited by DYNLL1 that prevents the dimerization of the protein. Inhibited by NOSIP. Its function is as follows. Produces nitric oxide (NO) which is a messenger molecule with diverse functions throughout the body. In the brain and peripheral nervous system, NO displays many properties of a neurotransmitter. Probably has nitrosylase activity and mediates cysteine S-nitrosylation of cytoplasmic target proteins such SRR. Isoform NNOS Mu may be an effector enzyme for the dystrophin complex. In Mus musculus (Mouse), this protein is Nitric oxide synthase 1.